We begin with the raw amino-acid sequence, 178 residues long: Fatty-acid and retinol-binding protein 1 (178 aa).

A signal peptide spans 1–16 (MYHQLILMALIGVIMA). N-linked (GlcNAc...) asparagine glycans are attached at residues Asn-44 and Asn-75. Coiled-coil stretches lie at residues 67–89 (DAALEALKNKSDKLYQKAVELRN) and 122–154 (QKLDMEKLKQAARDIIAKYEALNEETKEELKAT). Residue Asn-157 is glycosylated (N-linked (GlcNAc...) asparagine).

It belongs to the fatty-acid and retinol-binding protein (FARBP) family. Post-translationally, N-glycosylated.

Its subcellular location is the secreted. Functionally, binds retinol and different fatty acids. The sequence is that of Fatty-acid and retinol-binding protein 1 from Onchocerca ochengi (Filarial nematode worm).